The sequence spans 117 residues: MKHLWFFLLLVAAPRWVLSQVQLQESGPGLVKPSETLSLTCTVSGYSISSGYYWGWIRQPPGKGLEWIGSIYHSGSTYYNPSLKSRVTISVDTSKNQFSLKLSSVTAADTAVYYCAR.

Residues 1 to 19 (MKHLWFFLLLVAAPRWVLS) form the signal peptide. A framework-1 region spans residues 20 to 44 (QVQLQESGPGLVKPSETLSLTCTVS). The 98-residue stretch at 20–117 (QVQLQESGPG…ADTAVYYCAR (98 aa)) folds into the Ig-like domain. A disulfide bridge links Cys-41 with Cys-115. Residues 45 to 53 (GYSISSGYY) are complementarity-determining-1. The framework-2 stretch occupies residues 54 to 70 (WGWIRQPPGKGLEWIGS). Positions 71 to 77 (IYHSGST) are complementarity-determining-2. Positions 78–115 (YYNPSLKSRVTISVDTSKNQFSLKLSSVTAADTAVYYC) are framework-3. The complementarity-determining-3 stretch occupies residues 116-117 (AR).

In terms of assembly, immunoglobulins are composed of two identical heavy chains and two identical light chains; disulfide-linked.

It is found in the secreted. The protein resides in the cell membrane. Functionally, v region of the variable domain of immunoglobulin heavy chains that participates in the antigen recognition. Immunoglobulins, also known as antibodies, are membrane-bound or secreted glycoproteins produced by B lymphocytes. In the recognition phase of humoral immunity, the membrane-bound immunoglobulins serve as receptors which, upon binding of a specific antigen, trigger the clonal expansion and differentiation of B lymphocytes into immunoglobulins-secreting plasma cells. Secreted immunoglobulins mediate the effector phase of humoral immunity, which results in the elimination of bound antigens. The antigen binding site is formed by the variable domain of one heavy chain, together with that of its associated light chain. Thus, each immunoglobulin has two antigen binding sites with remarkable affinity for a particular antigen. The variable domains are assembled by a process called V-(D)-J rearrangement and can then be subjected to somatic hypermutations which, after exposure to antigen and selection, allow affinity maturation for a particular antigen. This is Immunoglobulin heavy variable 4-38-2 from Homo sapiens (Human).